Here is a 218-residue protein sequence, read N- to C-terminus: Pyridoxine/pyridoxamine 5'-phosphate oxidase (218 aa).

Substrate is bound by residues 12 to 15 (RLSY) and Arg-70. FMN is bound by residues 65-70 (RTVLLR), 80-81 (YT), Lys-87, and Gln-109. Substrate contacts are provided by Tyr-127, Arg-131, and Ser-135. FMN contacts are provided by residues 145–146 (QS) and Trp-191. 197–199 (RLH) contacts substrate. Arg-201 is an FMN binding site.

It belongs to the pyridoxamine 5'-phosphate oxidase family. As to quaternary structure, homodimer. FMN is required as a cofactor.

The enzyme catalyses pyridoxamine 5'-phosphate + O2 + H2O = pyridoxal 5'-phosphate + H2O2 + NH4(+). It carries out the reaction pyridoxine 5'-phosphate + O2 = pyridoxal 5'-phosphate + H2O2. Its pathway is cofactor metabolism; pyridoxal 5'-phosphate salvage; pyridoxal 5'-phosphate from pyridoxamine 5'-phosphate: step 1/1. It functions in the pathway cofactor metabolism; pyridoxal 5'-phosphate salvage; pyridoxal 5'-phosphate from pyridoxine 5'-phosphate: step 1/1. Functionally, catalyzes the oxidation of either pyridoxine 5'-phosphate (PNP) or pyridoxamine 5'-phosphate (PMP) into pyridoxal 5'-phosphate (PLP). The sequence is that of Pyridoxine/pyridoxamine 5'-phosphate oxidase from Acinetobacter baumannii (strain AB0057).